Here is a 299-residue protein sequence, read N- to C-terminus: tRNA uridine(34) hydroxylase (299 aa).

The Rhodanese domain maps to 132–226; it reads AGRPVVMLDT…YFEEVGGAHY (95 aa). The Cysteine persulfide intermediate role is filled by Cys186.

The protein belongs to the TrhO family.

The enzyme catalyses uridine(34) in tRNA + AH2 + O2 = 5-hydroxyuridine(34) in tRNA + A + H2O. Its function is as follows. Catalyzes oxygen-dependent 5-hydroxyuridine (ho5U) modification at position 34 in tRNAs. In Burkholderia mallei (strain NCTC 10247), this protein is tRNA uridine(34) hydroxylase.